The sequence spans 458 residues: MRADRPGHRSRGINPGPGMFTLVGPDERDDPEVAVDPIRRVAMISLHTSPLDQPGTGDAGGMNVYVIELSKRLAAQGIAVDIFTRATTSAVEPLVEAYDGVQVRHIHAGPFEGLTKAELPGQLCVFAREVLRAEAAQPVGHYDVVHSHYWLSGQVGALARDRWGVPLVHSMHTMAKVKNDALAEGDTPEPAARIIGEEQVVEAADMLVANTDIEAKQLVNMYDADPSRVEVVHPGVDLGVFRPQDRSTARARLGLPEDAAVLLFAGRIQPLKAPDVLLRAVAELLAQTPELRSRLVVPIVGGPSGSGLEHPESLAQLASELGLDGAGGTGPVVRFVPPVSQEELARWCAAATLVAVPSYNESFGLVAAEAQATGTPVVAAAVGGLTTVVRDGRSGLLVDTHDPRDWADALRRVVENDAFRDRLAAGALEQARLFSWEHTARQTLDVYRRARAEIREAV.

Residues 1–29 (MRADRPGHRSRGINPGPGMFTLVGPDERD) are disordered. Residue histidine 47 coordinates 1D-myo-inositol 3-phosphate. UDP-N-acetyl-alpha-D-glucosamine is bound by residues 53 to 54 (QP) and glycine 61. 1D-myo-inositol 3-phosphate-binding positions include 58-63 (DAGGMN), lysine 116, tyrosine 149, threonine 173, and arginine 193. The UDP-N-acetyl-alpha-D-glucosamine site is built by arginine 267, lysine 272, and valine 339. Alanine 351 is a binding site for Mg(2+). Glutamate 361 and glutamate 369 together coordinate UDP-N-acetyl-alpha-D-glucosamine. Threonine 375 contributes to the Mg(2+) binding site.

The protein belongs to the glycosyltransferase group 1 family. MshA subfamily. In terms of assembly, homodimer.

It catalyses the reaction 1D-myo-inositol 3-phosphate + UDP-N-acetyl-alpha-D-glucosamine = 1D-myo-inositol 2-acetamido-2-deoxy-alpha-D-glucopyranoside 3-phosphate + UDP + H(+). Functionally, catalyzes the transfer of a N-acetyl-glucosamine moiety to 1D-myo-inositol 3-phosphate to produce 1D-myo-inositol 2-acetamido-2-deoxy-glucopyranoside 3-phosphate in the mycothiol biosynthesis pathway. The chain is D-inositol 3-phosphate glycosyltransferase from Nocardioides sp. (strain ATCC BAA-499 / JS614).